Here is a 310-residue protein sequence, read N- to C-terminus: Aspartate carbamoyltransferase catalytic subunit (310 aa).

Carbamoyl phosphate is bound by residues R58 and T59. An L-aspartate-binding site is contributed by K86. Residues R108, H136, and Q139 each coordinate carbamoyl phosphate. 2 residues coordinate L-aspartate: R169 and R224. Residues G265 and P266 each contribute to the carbamoyl phosphate site.

This sequence belongs to the aspartate/ornithine carbamoyltransferase superfamily. ATCase family. In terms of assembly, heterododecamer (2C3:3R2) of six catalytic PyrB chains organized as two trimers (C3), and six regulatory PyrI chains organized as three dimers (R2).

It carries out the reaction carbamoyl phosphate + L-aspartate = N-carbamoyl-L-aspartate + phosphate + H(+). Its pathway is pyrimidine metabolism; UMP biosynthesis via de novo pathway; (S)-dihydroorotate from bicarbonate: step 2/3. Functionally, catalyzes the condensation of carbamoyl phosphate and aspartate to form carbamoyl aspartate and inorganic phosphate, the committed step in the de novo pyrimidine nucleotide biosynthesis pathway. The chain is Aspartate carbamoyltransferase catalytic subunit from Citrifermentans bemidjiense (strain ATCC BAA-1014 / DSM 16622 / JCM 12645 / Bem) (Geobacter bemidjiensis).